The sequence spans 420 residues: 3-isopropylmalate dehydratase large subunit (420 aa).

[4Fe-4S] cluster contacts are provided by Cys300, Cys360, and Cys363.

This sequence belongs to the aconitase/IPM isomerase family. LeuC type 2 subfamily. Heterodimer of LeuC and LeuD. Requires [4Fe-4S] cluster as cofactor.

The catalysed reaction is (2R,3S)-3-isopropylmalate = (2S)-2-isopropylmalate. Its pathway is amino-acid biosynthesis; L-leucine biosynthesis; L-leucine from 3-methyl-2-oxobutanoate: step 2/4. Catalyzes the isomerization between 2-isopropylmalate and 3-isopropylmalate, via the formation of 2-isopropylmaleate. The polypeptide is 3-isopropylmalate dehydratase large subunit (Heliobacterium modesticaldum (strain ATCC 51547 / Ice1)).